The following is a 393-amino-acid chain: Protein phosphatase 2C homolog 4 (393 aa).

In terms of domain architecture, PPM-type phosphatase spans 33-368; sequence YNCVGSMQGY…DNMTAIIVVL (336 aa). Mn(2+)-binding residues include Asp-83, Gly-84, Asp-310, and Asp-359.

It belongs to the PP2C family. Mg(2+) serves as cofactor. The cofactor is Mn(2+).

The catalysed reaction is O-phospho-L-seryl-[protein] + H2O = L-seryl-[protein] + phosphate. The enzyme catalyses O-phospho-L-threonyl-[protein] + H2O = L-threonyl-[protein] + phosphate. This Saccharomyces cerevisiae (strain ATCC 204508 / S288c) (Baker's yeast) protein is Protein phosphatase 2C homolog 4 (PTC4).